Reading from the N-terminus, the 725-residue chain is Probable dipeptidyl-peptidase 5 (725 aa).

The first 18 residues, 1–18 (MGALRWLSIAATASTALA), serve as a signal peptide directing secretion. Residues Asn75, Asn96, Asn153, Asn258, Asn383, and Asn453 are each glycosylated (N-linked (GlcNAc...) asparagine). The active-site Charge relay system is Ser563. The N-linked (GlcNAc...) asparagine glycan is linked to Asn610. Catalysis depends on charge relay system residues Asp646 and His678.

Belongs to the peptidase S9C family.

It is found in the secreted. Functionally, extracellular dipeptidyl-peptidase which removes N-terminal dipeptides sequentially from polypeptides having unsubstituted N-termini. This is Probable dipeptidyl-peptidase 5 (dpp5) from Aspergillus flavus (strain ATCC 200026 / FGSC A1120 / IAM 13836 / NRRL 3357 / JCM 12722 / SRRC 167).